The following is a 66-amino-acid chain: Large ribosomal subunit protein bL35 (66 aa).

Basic residues predominate over residues 1-24 (MPKQKTHRGAAKRFKKTGSGKLKR). Residues 1–26 (MPKQKTHRGAAKRFKKTGSGKLKRDH) are disordered.

It belongs to the bacterial ribosomal protein bL35 family.

The chain is Large ribosomal subunit protein bL35 from Bacillus cytotoxicus (strain DSM 22905 / CIP 110041 / 391-98 / NVH 391-98).